Consider the following 321-residue polypeptide: Ferredoxin--NADP reductase (321 aa).

Glutamate 33, glutamine 41, tyrosine 46, valine 86, leucine 119, aspartate 277, and serine 318 together coordinate FAD.

This sequence belongs to the ferredoxin--NADP reductase type 2 family. Homodimer. FAD is required as a cofactor.

It catalyses the reaction 2 reduced [2Fe-2S]-[ferredoxin] + NADP(+) + H(+) = 2 oxidized [2Fe-2S]-[ferredoxin] + NADPH. This Lactococcus lactis subsp. cremoris (strain MG1363) protein is Ferredoxin--NADP reductase.